We begin with the raw amino-acid sequence, 362 residues long: Chorismate synthase (362 aa).

Arg47 provides a ligand contact to NADP(+). FMN-binding positions include 124-126 (RSS), Gly286, 301-305 (KPTAT), and Arg327.

Belongs to the chorismate synthase family. Homotetramer. It depends on FMNH2 as a cofactor.

The enzyme catalyses 5-O-(1-carboxyvinyl)-3-phosphoshikimate = chorismate + phosphate. It functions in the pathway metabolic intermediate biosynthesis; chorismate biosynthesis; chorismate from D-erythrose 4-phosphate and phosphoenolpyruvate: step 7/7. Its function is as follows. Catalyzes the anti-1,4-elimination of the C-3 phosphate and the C-6 proR hydrogen from 5-enolpyruvylshikimate-3-phosphate (EPSP) to yield chorismate, which is the branch point compound that serves as the starting substrate for the three terminal pathways of aromatic amino acid biosynthesis. This reaction introduces a second double bond into the aromatic ring system. The chain is Chorismate synthase from Synechococcus elongatus (strain ATCC 33912 / PCC 7942 / FACHB-805) (Anacystis nidulans R2).